The following is a 154-amino-acid chain: Large ribosomal subunit protein uL22 (154 aa).

Belongs to the universal ribosomal protein uL22 family. In terms of assembly, part of the 50S ribosomal subunit.

Functionally, this protein binds specifically to 23S rRNA. It makes multiple contacts with different domains of the 23S rRNA in the assembled 50S subunit and ribosome. Its function is as follows. The globular domain of the protein is located near the polypeptide exit tunnel on the outside of the subunit, while an extended beta-hairpin is found that lines the wall of the exit tunnel in the center of the 70S ribosome. The polypeptide is Large ribosomal subunit protein uL22 (Natronomonas pharaonis (strain ATCC 35678 / DSM 2160 / CIP 103997 / JCM 8858 / NBRC 14720 / NCIMB 2260 / Gabara) (Halobacterium pharaonis)).